A 342-amino-acid chain; its full sequence is 4-hydroxy-2-oxovalerate aldolase (342 aa).

The region spanning 5-257 is the Pyruvate carboxyltransferase domain; it reads ITLHDMTLRD…DTGVDVWKIQ (253 aa). 13–14 contacts substrate; the sequence is RD. Residue Asp-14 coordinates Mn(2+). Catalysis depends on His-17, which acts as the Proton acceptor. Substrate is bound by residues Ser-167 and His-196. Residues His-196 and His-198 each coordinate Mn(2+). Tyr-287 contributes to the substrate binding site.

The protein belongs to the 4-hydroxy-2-oxovalerate aldolase family.

It catalyses the reaction (S)-4-hydroxy-2-oxopentanoate = acetaldehyde + pyruvate. The sequence is that of 4-hydroxy-2-oxovalerate aldolase from Acidovorax sp. (strain JS42).